Consider the following 197-residue polypeptide: Lymphotoxin-alpha (197 aa).

Positions 1 to 26 (MTPPGRLYLPLLLGLLLAPPPPGAQG) are cleaved as a signal peptide. The 143-residue stretch at 55 to 197 (PAAHLVGDPS…SSVFFGAFAL (143 aa)) folds into the THD domain. N-linked (GlcNAc...) asparagine glycosylation is present at N88. Residues C112 and C148 are joined by a disulfide bond.

This sequence belongs to the tumor necrosis factor family. Homotrimer, and heterotrimer of either two LTB and one LTA subunits or (less prevalent) two LTA and one LTB subunits. Interacts with TNFRSF14.

The protein resides in the secreted. The protein localises to the membrane. In terms of biological role, cytokine that in its homotrimeric form binds to TNFRSF1A/TNFR1, TNFRSF1B/TNFBR and TNFRSF14/HVEM. In its heterotrimeric form with LTB binds to TNFRSF3/LTBR. Lymphotoxin is produced by lymphocytes and is cytotoxic for a wide range of tumor cells in vitro and in vivo. The protein is Lymphotoxin-alpha (LTA) of Oryctolagus cuniculus (Rabbit).